Reading from the N-terminus, the 92-residue chain is Small ribosomal subunit protein uS19 (92 aa).

The protein belongs to the universal ribosomal protein uS19 family.

Protein S19 forms a complex with S13 that binds strongly to the 16S ribosomal RNA. The sequence is that of Small ribosomal subunit protein uS19 from Dinoroseobacter shibae (strain DSM 16493 / NCIMB 14021 / DFL 12).